We begin with the raw amino-acid sequence, 287 residues long: ATP synthase gamma chain (287 aa).

The protein belongs to the ATPase gamma chain family. In terms of assembly, F-type ATPases have 2 components, CF(1) - the catalytic core - and CF(0) - the membrane proton channel. CF(1) has five subunits: alpha(3), beta(3), gamma(1), delta(1), epsilon(1). CF(0) has three main subunits: a, b and c.

It is found in the cell inner membrane. Its function is as follows. Produces ATP from ADP in the presence of a proton gradient across the membrane. The gamma chain is believed to be important in regulating ATPase activity and the flow of protons through the CF(0) complex. This is ATP synthase gamma chain from Yersinia enterocolitica serotype O:8 / biotype 1B (strain NCTC 13174 / 8081).